Consider the following 370-residue polypeptide: Histidinol-phosphate aminotransferase 1 (370 aa).

K229 is modified (N6-(pyridoxal phosphate)lysine).

This sequence belongs to the class-II pyridoxal-phosphate-dependent aminotransferase family. Histidinol-phosphate aminotransferase subfamily. Homodimer. It depends on pyridoxal 5'-phosphate as a cofactor.

It carries out the reaction L-histidinol phosphate + 2-oxoglutarate = 3-(imidazol-4-yl)-2-oxopropyl phosphate + L-glutamate. It participates in amino-acid biosynthesis; L-histidine biosynthesis; L-histidine from 5-phospho-alpha-D-ribose 1-diphosphate: step 7/9. This Nitrosococcus oceani (strain ATCC 19707 / BCRC 17464 / JCM 30415 / NCIMB 11848 / C-107) protein is Histidinol-phosphate aminotransferase 1.